A 156-amino-acid polypeptide reads, in one-letter code: ATP synthase subunit b (156 aa).

A helical membrane pass occupies residues 12-32; the sequence is VAFLIFVLFCMKYVWPPVITA.

It belongs to the ATPase B chain family. F-type ATPases have 2 components, F(1) - the catalytic core - and F(0) - the membrane proton channel. F(1) has five subunits: alpha(3), beta(3), gamma(1), delta(1), epsilon(1). F(0) has three main subunits: a(1), b(2) and c(10-14). The alpha and beta chains form an alternating ring which encloses part of the gamma chain. F(1) is attached to F(0) by a central stalk formed by the gamma and epsilon chains, while a peripheral stalk is formed by the delta and b chains.

It is found in the cell inner membrane. In terms of biological role, f(1)F(0) ATP synthase produces ATP from ADP in the presence of a proton or sodium gradient. F-type ATPases consist of two structural domains, F(1) containing the extramembraneous catalytic core and F(0) containing the membrane proton channel, linked together by a central stalk and a peripheral stalk. During catalysis, ATP synthesis in the catalytic domain of F(1) is coupled via a rotary mechanism of the central stalk subunits to proton translocation. Component of the F(0) channel, it forms part of the peripheral stalk, linking F(1) to F(0). The polypeptide is ATP synthase subunit b (Pseudomonas putida (strain GB-1)).